Here is a 411-residue protein sequence, read N- to C-terminus: Dihydrofolate synthase/folylpolyglutamate synthase (411 aa).

53 to 56 (GKGT) serves as a coordination point for ATP. Ser77 contributes to the Mg(2+) binding site. 7,8-dihydropteroate-binding positions include 116–119 (TYFE) and 147–149 (LDA). His167 contributes to the Mg(2+) binding site. Arg283 and Asp296 together coordinate ATP.

It belongs to the folylpolyglutamate synthase family. In terms of assembly, monomer. The cofactor is Mg(2+).

The enzyme catalyses 7,8-dihydropteroate + L-glutamate + ATP = 7,8-dihydrofolate + ADP + phosphate + H(+). It carries out the reaction (6S)-5,6,7,8-tetrahydrofolyl-(gamma-L-Glu)(n) + L-glutamate + ATP = (6S)-5,6,7,8-tetrahydrofolyl-(gamma-L-Glu)(n+1) + ADP + phosphate + H(+). The catalysed reaction is 10-formyltetrahydrofolyl-(gamma-L-Glu)(n) + L-glutamate + ATP = 10-formyltetrahydrofolyl-(gamma-L-Glu)(n+1) + ADP + phosphate + H(+). It catalyses the reaction (6R)-5,10-methylenetetrahydrofolyl-(gamma-L-Glu)(n) + L-glutamate + ATP = (6R)-5,10-methylenetetrahydrofolyl-(gamma-L-Glu)(n+1) + ADP + phosphate + H(+). Its pathway is cofactor biosynthesis; tetrahydrofolate biosynthesis; 7,8-dihydrofolate from 2-amino-4-hydroxy-6-hydroxymethyl-7,8-dihydropteridine diphosphate and 4-aminobenzoate: step 2/2. It functions in the pathway cofactor biosynthesis; tetrahydrofolylpolyglutamate biosynthesis. In terms of biological role, functions in two distinct reactions of the de novo folate biosynthetic pathway. Catalyzes the addition of a glutamate residue to dihydropteroate (7,8-dihydropteroate or H2Pte) to form dihydrofolate (7,8-dihydrofolate monoglutamate or H2Pte-Glu). Also catalyzes successive additions of L-glutamate to tetrahydrofolate or 10-formyltetrahydrofolate or 5,10-methylenetetrahydrofolate, leading to folylpolyglutamate derivatives. The chain is Dihydrofolate synthase/folylpolyglutamate synthase (folC) from Buchnera aphidicola subsp. Acyrthosiphon pisum (strain APS) (Acyrthosiphon pisum symbiotic bacterium).